The sequence spans 1050 residues: MSKFFIDRPIFAWVIALVIMLVGALSILKLPINQYPSIAPPAIAIAVTYPGASAQTVQDTVVQVIEQQLNGIDNLRYVSSESNSDGSMTITATFEQGTNPDTAQVQVQNKLNLATPLLPQEVQQQGIRVTKAVKNFLLVIGLVSEDGSMTKDDLANYIVSNMQDPISRTAGVGDFQVFGAQYAMRIWLDPAKLNKFQLTPVDVKTAVAAQNVQVSSGQLGGLPALPGTQLNATIIGKTRLQTAEQFESILLKVNKDGSQVRLGDVAQVGLGGENYAVSAQFNGKPASGLAVKLATGANALDTAKALRETIKGLEPFFPPGVKAVFPYDTTPVVTESISGVIHTLIEAVVLVFLVMYLFLQNFRATIITTMTVPVVLLGTFGILAAAGFSINTLTMFAMVLAIGLLVDDAIVVVENVERVMSEEGLPPKEATKRSMEQIQGALVGIALVLSAVLLPMAFFGGSTGVIYRQFSITIVSAMGLSVLVALIFTPALCATMLKPLKKGEHHTAKGGFFGWFNRNFDRSVNGYERSVGTILRNKVPFLLAYALIVVGMIWLFARIPTAFLPEEDQGVLFAQVQTPAGSSAERTQVVVDQMREYLLKDEADTVSSVFTVNGFNFAGRGQSSGMAFIMLKPWDERSKENSVFALAQRAQQHFFTFRDAMVFAFAPPAVLELGNATGFDVFLQDRGGVGHAKLMEARNQFLAKAAQSKILSAVRPNGLNDEPQYQLTIDDERASALGVTIADINNTLSIALGASYVNDFIDRGRVKKVYIQGEPSARMSPEDLQKWYVRNGAGEMVPFSSFAKGEWTYGSPKLSRYNGVEAMEILGAPAPGYSTGEAMAEVERIAGELPSGIGFSWTGMSYEEKLSGSQMPALFALSVLFVFLCLAALYESWSIPIAVVLVVPLGIIGALIATSLRGLSNDVYFLVGLLTTIGLAAKNAILIVEFAKELHEQGRSLYDAAIEACRMRLRPIIMTSLAFILGVVPLTIASGAGAGSQHAIGTGVIGGMISATVLAIFWVPLFFVAVSSLFGSKEPEKDVTPENPRYEAGQ.

12 helical membrane-spanning segments follow: residues 10–30, 339–359, 370–390, 393–413, 440–460, 472–492, 539–559, 871–891, 893–913, 923–943, 972–992, and 1004–1024; these read IFAW…ILKL, GVIH…YLFL, MTVP…GFSI, LTMF…IVVV, GALV…AFFG, ITIV…TPAL, VPFL…FARI, MPAL…ALYE, WSIP…ALIA, VYFL…AILI, IIMT…ASGA, and VIGG…LFFV.

Belongs to the resistance-nodulation-cell division (RND) (TC 2.A.6) family.

It is found in the cell inner membrane. The inner membrane transporter component of a constitutive organic solvent efflux system. Involved in export of toluene, styrene, m-xylene, propylbenzene and ethylbenzene. Also exports AMP and the antibiotics carbenicillin, nalidixic acid, chloramphenicol and tetracycline. This Pseudomonas putida (strain DOT-T1E) protein is Toluene efflux pump membrane transporter TtgB (ttgB).